Reading from the N-terminus, the 380-residue chain is Probable inactive dehydrogenase easA (380 aa).

FMN is bound by residues 25–27 (PMT), A60, Q102, and H171. The substrate site is built by H171 and N174. FMN contacts are provided by residues K223, G299, 324 to 325 (GR), and R325. A substrate-binding site is contributed by Y352.

It belongs to the NADH:flavin oxidoreductase/NADH oxidase family.

Functionally, probable inactive dehydrogenase; part of the gene cluster that mediates the biosynthesis of fungal ergot alkaloid. DmaW catalyzes the first step of ergot alkaloid biosynthesis by condensing dimethylallyl diphosphate (DMAP) and tryptophan to form 4-dimethylallyl-L-tryptophan. The second step is catalyzed by the methyltransferase easF that methylates 4-dimethylallyl-L-tryptophan in the presence of S-adenosyl-L-methionine, resulting in the formation of 4-dimethylallyl-L-abrine. The catalase easC and the FAD-dependent oxidoreductase easE then transform 4-dimethylallyl-L-abrine to chanoclavine-I which is further oxidized by easD in the presence of NAD(+), resulting in the formation of chanoclavine-I aldehyde. Agroclavine dehydrogenase easG then mediates the conversion of chanoclavine-I aldehyde to agroclavine via a non-enzymatic adduct reaction: the substrate is an iminium intermediate that is formed spontaneously from chanoclavine-I aldehyde in the presence of glutathione. The presence of easA is not required to complete this reaction. Further conversion of agroclavine to paspalic acid is a two-step process involving oxidation of agroclavine to elymoclavine and of elymoclavine to paspalic acid, the second step being performed by the elymoclavine oxidase cloA. Paspalic acid is then further converted to D-lysergic acid. Ergopeptines are assembled from D-lysergic acid and three different amino acids by the D-lysergyl-peptide-synthetases composed each of a monomudular and a trimodular nonribosomal peptide synthetase subunit. LpsB and lpsC encode the monomodular subunits responsible for D-lysergic acid activation and incorporation into the ergopeptine backbone. LpsA1 and A2 subunits encode the trimodular nonribosomal peptide synthetase assembling the tripeptide portion of ergopeptines. LpsA1 is responsible for formation of the major ergopeptine, ergotamine, and lpsA2 for alpha-ergocryptine, the minor ergopeptine of the total alkaloid mixture elaborated by C.purpurea. D-lysergyl-tripeptides are assembled by the nonribosomal peptide synthetases and released as N-(D-lysergyl-aminoacyl)-lactams. Cyclolization of the D-lysergyl-tripeptides is performed by the Fe(2+)/2-ketoglutarate-dependent dioxygenase easH which introduces a hydroxyl group into N-(D-lysergyl-aminoacyl)-lactam at alpha-C of the aminoacyl residue followed by spontaneous condensation with the terminal lactam carbonyl group. In Claviceps purpurea (Ergot fungus), this protein is Probable inactive dehydrogenase easA.